The primary structure comprises 219 residues: Ribose-5-phosphate isomerase A (219 aa).

Substrate-binding positions include 28 to 31 (TGST), 81 to 84 (DGAD), and 94 to 97 (KGGG). E103 functions as the Proton acceptor in the catalytic mechanism. K121 provides a ligand contact to substrate.

Belongs to the ribose 5-phosphate isomerase family. Homodimer.

The catalysed reaction is aldehydo-D-ribose 5-phosphate = D-ribulose 5-phosphate. It participates in carbohydrate degradation; pentose phosphate pathway; D-ribose 5-phosphate from D-ribulose 5-phosphate (non-oxidative stage): step 1/1. In terms of biological role, catalyzes the reversible conversion of ribose-5-phosphate to ribulose 5-phosphate. The polypeptide is Ribose-5-phosphate isomerase A (Shewanella pealeana (strain ATCC 700345 / ANG-SQ1)).